The primary structure comprises 477 residues: Argininosuccinate synthase (477 aa).

Residues 17-25 (AFSGGLDTS) and alanine 43 each bind ATP. Residue tyrosine 99 participates in L-citrulline binding. Residues glycine 129 and threonine 131 each coordinate ATP. L-aspartate is bound by residues threonine 131, asparagine 135, and aspartate 136. Asparagine 135 is a binding site for L-citrulline. Aspartate 136 serves as a coordination point for ATP. L-citrulline-binding residues include arginine 139 and serine 192. An ATP-binding site is contributed by aspartate 194. L-citrulline contacts are provided by threonine 201, glutamate 203, and glutamate 280. The segment at 450–477 (DQITENPEVQAEPEEEALDAAAMEAGTD) is disordered. Over residues 468–477 (DAAAMEAGTD) the composition is skewed to low complexity.

The protein belongs to the argininosuccinate synthase family. Type 2 subfamily. As to quaternary structure, homotetramer.

The protein resides in the cytoplasm. The enzyme catalyses L-citrulline + L-aspartate + ATP = 2-(N(omega)-L-arginino)succinate + AMP + diphosphate + H(+). Its pathway is amino-acid biosynthesis; L-arginine biosynthesis; L-arginine from L-ornithine and carbamoyl phosphate: step 2/3. This chain is Argininosuccinate synthase, found in Nocardioides sp. (strain ATCC BAA-499 / JS614).